The chain runs to 238 residues: Probable transcriptional regulatory protein SpyM51586 (238 aa).

This sequence belongs to the TACO1 family. YeeN subfamily.

It localises to the cytoplasm. The polypeptide is Probable transcriptional regulatory protein SpyM51586 (Streptococcus pyogenes serotype M5 (strain Manfredo)).